Consider the following 472-residue polypeptide: Adenosylhomocysteinase (472 aa).

Substrate is bound by residues threonine 61, aspartate 136, and glutamate 196. 197–199 (TTT) contributes to the NAD(+) binding site. Positions 226 and 230 each coordinate substrate. Residues asparagine 231, 260 to 265 (GYGDVG), glutamate 283, asparagine 318, 339 to 341 (IGH), and asparagine 384 each bind NAD(+).

Belongs to the adenosylhomocysteinase family. NAD(+) serves as cofactor.

Its subcellular location is the cytoplasm. The enzyme catalyses S-adenosyl-L-homocysteine + H2O = L-homocysteine + adenosine. Its pathway is amino-acid biosynthesis; L-homocysteine biosynthesis; L-homocysteine from S-adenosyl-L-homocysteine: step 1/1. Its function is as follows. May play a key role in the regulation of the intracellular concentration of adenosylhomocysteine. The chain is Adenosylhomocysteinase from Cupriavidus metallidurans (strain ATCC 43123 / DSM 2839 / NBRC 102507 / CH34) (Ralstonia metallidurans).